Consider the following 203-residue polypeptide: Glycerol-3-phosphate acyltransferase (203 aa).

4 helical membrane-spanning segments follow: residues 6-26 (LTLL…AVLV), 82-102 (AISL…PIFF), 118-138 (APIG…LVLI), and 141-161 (YSSL…WWLD).

Belongs to the PlsY family. As to quaternary structure, probably interacts with PlsX.

The protein localises to the cell inner membrane. The enzyme catalyses an acyl phosphate + sn-glycerol 3-phosphate = a 1-acyl-sn-glycero-3-phosphate + phosphate. The protein operates within lipid metabolism; phospholipid metabolism. Its function is as follows. Catalyzes the transfer of an acyl group from acyl-phosphate (acyl-PO(4)) to glycerol-3-phosphate (G3P) to form lysophosphatidic acid (LPA). This enzyme utilizes acyl-phosphate as fatty acyl donor, but not acyl-CoA or acyl-ACP. The protein is Glycerol-3-phosphate acyltransferase of Shewanella sp. (strain MR-7).